Reading from the N-terminus, the 208-residue chain is Small ribosomal subunit protein uS4 (208 aa).

The 62-residue stretch at 98-159 (LRLDNVAYRL…AARTHIRIAA (62 aa)) folds into the S4 RNA-binding domain.

The protein belongs to the universal ribosomal protein uS4 family. In terms of assembly, part of the 30S ribosomal subunit. Contacts protein S5. The interaction surface between S4 and S5 is involved in control of translational fidelity.

Functionally, one of the primary rRNA binding proteins, it binds directly to 16S rRNA where it nucleates assembly of the body of the 30S subunit. Its function is as follows. With S5 and S12 plays an important role in translational accuracy. The protein is Small ribosomal subunit protein uS4 of Acidithiobacillus ferrooxidans (strain ATCC 23270 / DSM 14882 / CIP 104768 / NCIMB 8455) (Ferrobacillus ferrooxidans (strain ATCC 23270)).